A 350-amino-acid polypeptide reads, in one-letter code: Biotin synthase (350 aa).

One can recognise a Radical SAM core domain in the interval 54 to 278; it reads REIQLSTLLS…TMPQSYVRLS (225 aa). 3 residues coordinate [4Fe-4S] cluster: Cys69, Cys73, and Cys76. 4 residues coordinate [2Fe-2S] cluster: Cys113, Cys144, Cys204, and Arg276.

It belongs to the radical SAM superfamily. Biotin synthase family. Homodimer. Requires [4Fe-4S] cluster as cofactor. [2Fe-2S] cluster is required as a cofactor.

It catalyses the reaction (4R,5S)-dethiobiotin + (sulfur carrier)-SH + 2 reduced [2Fe-2S]-[ferredoxin] + 2 S-adenosyl-L-methionine = (sulfur carrier)-H + biotin + 2 5'-deoxyadenosine + 2 L-methionine + 2 oxidized [2Fe-2S]-[ferredoxin]. It participates in cofactor biosynthesis; biotin biosynthesis; biotin from 7,8-diaminononanoate: step 2/2. Catalyzes the conversion of dethiobiotin (DTB) to biotin by the insertion of a sulfur atom into dethiobiotin via a radical-based mechanism. The chain is Biotin synthase from Neisseria meningitidis serogroup A / serotype 4A (strain DSM 15465 / Z2491).